Reading from the N-terminus, the 261-residue chain is Glucosamine-6-phosphate deaminase (261 aa).

The active-site Proton acceptor; for enolization step is the Asp67. The active-site For ring-opening step is the Asp136. Catalysis depends on His138, which acts as the Proton acceptor; for ring-opening step. The active-site For ring-opening step is the Glu143.

It belongs to the glucosamine/galactosamine-6-phosphate isomerase family. NagB subfamily.

It catalyses the reaction alpha-D-glucosamine 6-phosphate + H2O = beta-D-fructose 6-phosphate + NH4(+). It participates in amino-sugar metabolism; N-acetylneuraminate degradation; D-fructose 6-phosphate from N-acetylneuraminate: step 5/5. In terms of biological role, catalyzes the reversible isomerization-deamination of glucosamine 6-phosphate (GlcN6P) to form fructose 6-phosphate (Fru6P) and ammonium ion. In Streptomyces avermitilis (strain ATCC 31267 / DSM 46492 / JCM 5070 / NBRC 14893 / NCIMB 12804 / NRRL 8165 / MA-4680), this protein is Glucosamine-6-phosphate deaminase.